The chain runs to 223 residues: Membrane-associated progesterone receptor component 2 (223 aa).

Positions 1-33 (MAAGDGDVKLGTLGSGSESSNDGGSESPGDAGA) are disordered. O-linked (Xyl...) (chondroitin sulfate) serine glycosylation is present at serine 15. Positions 15 to 33 (SGSESSNDGGSESPGDAGA) are enriched in low complexity. A helical transmembrane segment spans residues 42 to 66 (AAALALLTGGGEMLLNVALVALVLL). Serine 90, serine 104, and serine 208 each carry phosphoserine. The Cytochrome b5 heme-binding domain maps to 102–201 (DFSLEQLRQY…EKYDYVGRLL (100 aa)). The tract at residues 202–223 (KPGEEPSEYTDEEDTKDHNKQD) is disordered. Positions 206–215 (EPSEYTDEED) are enriched in acidic residues. Tyrosine 210 carries the post-translational modification Phosphotyrosine. Threonine 211 is modified (phosphothreonine).

This sequence belongs to the cytochrome b5 family. MAPR subfamily. In terms of assembly, interacts with PGRMC1. Interacts with AAAS. As to expression, expressed by endometrial glands and stroma (at protein level). Detected in urine (at protein level).

It localises to the membrane. The protein localises to the nucleus envelope. The protein resides in the endoplasmic reticulum. Its subcellular location is the secreted. Its function is as follows. Required for the maintenance of uterine histoarchitecture and normal female reproductive lifespan. May serve as a universal non-classical progesterone receptor in the uterus. Intracellular heme chaperone required for delivery of labile, or signaling heme, to the nucleus. Plays a role in adipocyte function and systemic glucose homeostasis. In brown fat, which has a high demand for heme, delivery of labile heme in the nucleus regulates the activity of heme-responsive transcriptional repressors such as NR1D1 and BACH1. The protein is Membrane-associated progesterone receptor component 2 of Homo sapiens (Human).